A 348-amino-acid polypeptide reads, in one-letter code: Eukaryotic translation initiation factor 3 subunit H (348 aa).

The segment at 1–25 (MASRKEGSGAAGGGFGASKGKGKAA) is disordered. Positions 9–19 (GAAGGGFGASK) are enriched in gly residues. Positions 35–169 (VQIDGLVVLK…LKAYRLTPKL (135 aa)) constitute an MPN domain. Residues 266–285 (QQQQKHQYQQRRQQENLQRQ) are compositionally biased toward low complexity. A disordered region spans residues 266–304 (QQQQKHQYQQRRQQENLQRQSRGEAPLPEEDINKLFKPP).

This sequence belongs to the eIF-3 subunit H family. In terms of assembly, component of the eukaryotic translation initiation factor 3 (eIF-3) complex, which is composed of 13 subunits: EIF3A, EIF3B, EIF3C, EIF3D, EIF3E, EIF3F, EIF3G, EIF3H, EIF3I, EIF3J, EIF3K, EIF3L and EIF3M.

It localises to the cytoplasm. Functionally, component of the eukaryotic translation initiation factor 3 (eIF-3) complex, which is involved in protein synthesis of a specialized repertoire of mRNAs and, together with other initiation factors, stimulates binding of mRNA and methionyl-tRNAi to the 40S ribosome. The eIF-3 complex specifically targets and initiates translation of a subset of mRNAs involved in cell proliferation. The polypeptide is Eukaryotic translation initiation factor 3 subunit H (Gallus gallus (Chicken)).